Consider the following 100-residue polypeptide: Small ribosomal subunit protein bS18c (100 aa).

This sequence belongs to the bacterial ribosomal protein bS18 family. As to quaternary structure, part of the 30S ribosomal subunit.

It localises to the plastid. It is found in the chloroplast. This is Small ribosomal subunit protein bS18c from Pleurastrum terricola (Filamentous green alga).